The primary structure comprises 64 residues: Long neurotoxin MS2 (64 aa).

Disulfide bonds link cysteine 3–cysteine 24, cysteine 6–cysteine 11, cysteine 17–cysteine 41, cysteine 45–cysteine 57, and cysteine 58–cysteine 63.

Belongs to the three-finger toxin family. Ancestral subfamily. Expressed by the venom gland.

It localises to the secreted. Functionally, produces peripheral paralysis by blocking neuromuscular transmission at the postsynaptic site. Very weak inhibitor of the endogenous nicotinic acetylcholine receptors (nAChR) in the human rhabdomyosarcoma TE 671 cell line. Not toxic to mice by intraperitoneal injection or to zebrafish by injection at the back of the dorsolateral region. In Micrurus surinamensis (Surinam coral snake), this protein is Long neurotoxin MS2.